The chain runs to 539 residues: Protein peanut (539 aa).

2 positions are modified to phosphoserine: S6 and S13. The disordered stretch occupies residues 29–90; it reads LRDKQQAASA…GASNGDSNKL (62 aa). Residues 35–54 show a composition bias toward low complexity; that stretch reads AASASASSATNGSSGSESLV. One can recognise a Septin-type G domain in the interval 139–411; it reads RGFEFTLMVV…ENYRCRKLSE (273 aa). The segment at 149–156 is G1 motif; the sequence is GASGLGKS. GTP contacts are provided by residues 149–156, T183, G209, 288–296, G345, and R360; these read GASGLGKS and KADTMTPDE. The tract at residues 206–209 is G3 motif; sequence DTPG. A G4 motif region spans residues 287–290; the sequence is AKAD. Residues 420–516 are a coiled coil; that stretch reads RLSNKNPLTQ…HVTLEELKRR (97 aa). A disordered region spans residues 513 to 539; it reads LKRRSLGANSSTDNVDGKKEKKKKGLF. A Phosphoserine modification is found at S517.

This sequence belongs to the TRAFAC class TrmE-Era-EngA-EngB-Septin-like GTPase superfamily. Septin GTPase family. As to quaternary structure, likely part of a multicomponent septin complex that includes Septin1. Interacts with Septin1. Interacts with hil. Interacts with park. Ubiquitinated by park, leading to its degradation by the proteasome. As to expression, accumulates at the leading edge of the cleavage furrow in dividing cells and cellularizing embryos (at protein level).

It is found in the apical cell membrane. The protein resides in the cleavage furrow. Its subcellular location is the cytoplasm. The protein localises to the cell cortex. In terms of biological role, involved in cytokinesis and possibly cellularization. Also acts as an enhancer of the sina gene, thus having a role in photoreceptor development. May be involved in p53-dependent apoptosis. This is Protein peanut (pnut) from Drosophila melanogaster (Fruit fly).